A 444-amino-acid polypeptide reads, in one-letter code: Phosphomethylpyrimidine synthase (444 aa).

Residues asparagine 80, methionine 109, tyrosine 138, histidine 174, 194–196, 235–238, and glutamate 274 each bind substrate; these read SRG and DSLR. Histidine 278 serves as a coordination point for Zn(2+). Tyrosine 301 contributes to the substrate binding site. Position 342 (histidine 342) interacts with Zn(2+). Residues cysteine 422, cysteine 425, and cysteine 430 each coordinate [4Fe-4S] cluster.

This sequence belongs to the ThiC family. As to quaternary structure, homodimer. Requires [4Fe-4S] cluster as cofactor.

It catalyses the reaction 5-amino-1-(5-phospho-beta-D-ribosyl)imidazole + S-adenosyl-L-methionine = 4-amino-2-methyl-5-(phosphooxymethyl)pyrimidine + CO + 5'-deoxyadenosine + formate + L-methionine + 3 H(+). Its pathway is cofactor biosynthesis; thiamine diphosphate biosynthesis. In terms of biological role, catalyzes the synthesis of the hydroxymethylpyrimidine phosphate (HMP-P) moiety of thiamine from aminoimidazole ribotide (AIR) in a radical S-adenosyl-L-methionine (SAM)-dependent reaction. The polypeptide is Phosphomethylpyrimidine synthase (Nitratiruptor sp. (strain SB155-2)).